The chain runs to 328 residues: MSVATSDMSGAGPEQAKAVLIAGPTASGKSALALRLAEARGGVVINTDSMQVYRDLRVLTARPTPDEEARAPHRLYGTVDAAQNFSAGAWLDAAAGALAEARRAGAMPIFIGGSGLYFKALTRGLSAVPPIAPEVREAVRERLARDGVAALHAELARCDSEAAARLNVADRSRVARALEVIIATGKPQAAWHAEALPPLLPPSEVLAAVFLAPQREALYARIDARFATMLAEGALDEVAALRARQLDPLLPAMKAHGVPALIRHLDGALSLDEAAAIGCADTRHYAKRQFTWFRHQLPEFCWVAPEEAGNYLGDVIPGRERSERARNP.

ATP is bound at residue 23–30 (GPTASGKS). 25-30 (TASGKS) is a substrate binding site. The interval 48–51 (DSMQ) is interaction with substrate tRNA.

Belongs to the IPP transferase family. In terms of assembly, monomer. It depends on Mg(2+) as a cofactor.

The enzyme catalyses adenosine(37) in tRNA + dimethylallyl diphosphate = N(6)-dimethylallyladenosine(37) in tRNA + diphosphate. In terms of biological role, catalyzes the transfer of a dimethylallyl group onto the adenine at position 37 in tRNAs that read codons beginning with uridine, leading to the formation of N6-(dimethylallyl)adenosine (i(6)A). The polypeptide is tRNA dimethylallyltransferase (Rhodopseudomonas palustris (strain BisA53)).